The following is a 71-amino-acid chain: Metallothionein-like protein 1 (71 aa).

The protein belongs to the metallothionein superfamily. Type 15 family.

Its function is as follows. Metallothioneins have a high content of cysteine residues that bind various heavy metals. The chain is Metallothionein-like protein 1 (MT1) from Casuarina glauca (Swamp oak).